We begin with the raw amino-acid sequence, 669 residues long: Protein real-time (669 aa).

The PRELI/MSF1 domain occupies 3-175 (QKFQSPVRVY…FINQLEQEGV (173 aa)). A CRAL-TRIO domain is found at 284–460 (EPAVVVEHFP…FLGGPCKTMI (177 aa)). Positions 522–641 (HQNLYKSVDL…QLNLFYEVLS (120 aa)) constitute a GOLD domain.

It localises to the mitochondrion. This Drosophila pseudoobscura pseudoobscura (Fruit fly) protein is Protein real-time.